A 438-amino-acid polypeptide reads, in one-letter code: Serine/threonine exchanger SteT (438 aa).

Residues methionine 1–glutamate 11 are Cytoplasmic-facing. The helical transmembrane segment at isoleucine 12–methionine 32 threads the bilayer. The Extracellular segment spans residues lysine 33–lysine 45. Residues methionine 46 to alanine 66 traverse the membrane as a helical segment. Topologically, residues glutamate 67–glutamine 98 are cytoplasmic. The chain crosses the membrane as a helical span at residues isoleucine 99–alanine 119. Residues asparagine 120–serine 126 lie on the Extracellular side of the membrane. The chain crosses the membrane as a helical span at residues glycine 127–glycine 147. Residues threonine 148 to glycine 151 lie on the Cytoplasmic side of the membrane. Residues glycine 152–phenylalanine 172 traverse the membrane as a helical segment. At glycine 173–asparagine 193 the chain is on the extracellular side. The helical transmembrane segment at phenylalanine 194–leucine 214 threads the bilayer. Over glycine 215–threonine 230 the chain is Cytoplasmic. A helical transmembrane segment spans residues glycine 231–leucine 251. Residues serine 252–threonine 269 lie on the Extracellular side of the membrane. The helical transmembrane segment at methionine 270–glycine 290 threads the bilayer. Residues cysteine 291 to threonine 327 lie on the Cytoplasmic side of the membrane. Residues proline 328–proline 348 traverse the membrane as a helical segment. The Extracellular portion of the chain corresponds to aspartate 349 to serine 352. A helical membrane pass occupies residues glutamate 353–leucine 373. Over arginine 374–leucine 388 the chain is Cytoplasmic. Residues tyrosine 389–isoleucine 409 form a helical membrane-spanning segment. Topologically, residues threonine 410 to aspartate 411 are extracellular. The helical transmembrane segment at threonine 412–methionine 432 threads the bilayer. Topologically, residues lysine 433–serine 438 are cytoplasmic.

It belongs to the amino acid-polyamine-organocation (APC) superfamily. L-type amino acid transporter (LAT) (TC 2.A.3.8) family. Monomer.

The protein localises to the cell membrane. Its function is as follows. Exhibits an obligate exchange activity for serine, threonine and aromatic amino acids. The polypeptide is Serine/threonine exchanger SteT (steT) (Bacillus subtilis (strain 168)).